The chain runs to 398 residues: 1-deoxy-D-xylulose 5-phosphate reductoisomerase (398 aa).

NADPH-binding residues include T10, G11, S12, I13, G36, K37, N38, and N124. Residue K125 coordinates 1-deoxy-D-xylulose 5-phosphate. E126 is an NADPH binding site. D150 serves as a coordination point for Mn(2+). Positions 151, 152, 186, and 209 each coordinate 1-deoxy-D-xylulose 5-phosphate. E152 is a binding site for Mn(2+). G215 is an NADPH binding site. Residues S222, N227, K228, and E231 each coordinate 1-deoxy-D-xylulose 5-phosphate. Mn(2+) is bound at residue E231.

It belongs to the DXR family. In terms of assembly, homodimer. The cofactor is Mg(2+). Mn(2+) is required as a cofactor.

The catalysed reaction is 2-C-methyl-D-erythritol 4-phosphate + NADP(+) = 1-deoxy-D-xylulose 5-phosphate + NADPH + H(+). The protein operates within isoprenoid biosynthesis; isopentenyl diphosphate biosynthesis via DXP pathway; isopentenyl diphosphate from 1-deoxy-D-xylulose 5-phosphate: step 1/6. In terms of biological role, catalyzes the NADPH-dependent rearrangement and reduction of 1-deoxy-D-xylulose-5-phosphate (DXP) to 2-C-methyl-D-erythritol 4-phosphate (MEP). The chain is 1-deoxy-D-xylulose 5-phosphate reductoisomerase from Salmonella choleraesuis (strain SC-B67).